A 265-amino-acid chain; its full sequence is Acetylglutamate kinase (265 aa).

Residues 41-42, R63, and N156 each bind substrate; that span reads GG.

Belongs to the acetylglutamate kinase family. ArgB subfamily.

The protein resides in the cytoplasm. The catalysed reaction is N-acetyl-L-glutamate + ATP = N-acetyl-L-glutamyl 5-phosphate + ADP. It functions in the pathway amino-acid biosynthesis; L-arginine biosynthesis; N(2)-acetyl-L-ornithine from L-glutamate: step 2/4. In terms of biological role, catalyzes the ATP-dependent phosphorylation of N-acetyl-L-glutamate. In Oceanobacillus iheyensis (strain DSM 14371 / CIP 107618 / JCM 11309 / KCTC 3954 / HTE831), this protein is Acetylglutamate kinase.